Reading from the N-terminus, the 454-residue chain is Protein odr-4 homolog (454 aa).

2 helical membrane passes run 82 to 102 (MLPG…ELAN) and 432 to 452 (IGVI…FHYF).

This sequence belongs to the ODR-4 family.

The protein resides in the membrane. May play a role in the trafficking of a subset of G-protein coupled receptors. This is Protein odr-4 homolog (ODR4) from Pongo abelii (Sumatran orangutan).